We begin with the raw amino-acid sequence, 35 residues long: Photosystem II reaction center protein Psb30 (35 aa).

Residues 6–26 (VIVQLVFLALIITTGPVIIVY) traverse the membrane as a helical segment.

This sequence belongs to the Psb30/Ycf12 family. PSII is composed of 1 copy each of membrane proteins PsbA, PsbB, PsbC, PsbD, PsbE, PsbF, PsbH, PsbI, PsbJ, PsbK, PsbL, PsbM, PsbT, PsbY, PsbZ, Psb30/Ycf12, peripheral proteins of the oxygen-evolving complex and a large number of cofactors. It forms dimeric complexes.

The protein localises to the plastid. It localises to the chloroplast thylakoid membrane. A core subunit of photosystem II (PSII), probably helps stabilize the reaction center. This is Photosystem II reaction center protein Psb30 from Cyanidium caldarium (Red alga).